The sequence spans 460 residues: Ankyrin repeat and MYND domain-containing protein 2 (460 aa).

ANK repeat units lie at residues 45-74 (HGMT…DVNC), 79-108 (HGYT…ETDV), and 159-188 (KLAG…NPLL). Zn(2+) is bound by residues Cys320, Cys323, Cys332, Cys335, Cys341, Cys345, His353, and Cys357. Residues 320–357 (CTTCGEKGADKRCSVCKVVMYCDQNCQKTHWFTHKKVC) form an MYND-type zinc finger. Composition is skewed to basic and acidic residues over residues 371–387 (AAKE…KDEA) and 425–436 (ELTKEPEARAPR). A disordered region spans residues 371–460 (AAKEKRRQEK…ALQKIQDSEE (90 aa)).

It is found in the cell projection. The protein localises to the cilium. Functionally, may be involved in the trafficking of signaling proteins to the cilia. The protein is Ankyrin repeat and MYND domain-containing protein 2 (ANKMY2) of Gallus gallus (Chicken).